Here is a 647-residue protein sequence, read N- to C-terminus: Threonine--tRNA ligase (647 aa).

Residues 1 to 61 (MINITFPDGA…TEDGSIEIVT (61 aa)) form the TGS domain. Residues 242 to 540 (DHRKLGKELD…LIENYKGAFP (299 aa)) are catalytic. Positions 336, 387, and 517 each coordinate Zn(2+).

Belongs to the class-II aminoacyl-tRNA synthetase family. Homodimer. Requires Zn(2+) as cofactor.

It is found in the cytoplasm. The catalysed reaction is tRNA(Thr) + L-threonine + ATP = L-threonyl-tRNA(Thr) + AMP + diphosphate + H(+). Catalyzes the attachment of threonine to tRNA(Thr) in a two-step reaction: L-threonine is first activated by ATP to form Thr-AMP and then transferred to the acceptor end of tRNA(Thr). Also edits incorrectly charged L-seryl-tRNA(Thr). The protein is Threonine--tRNA ligase of Streptococcus pneumoniae serotype 4 (strain ATCC BAA-334 / TIGR4).